We begin with the raw amino-acid sequence, 264 residues long: Apolipoprotein A-I (264 aa).

The signal sequence occupies residues 1–18 (MKAVLLVVAALFLAGSQA). Tandem repeats lie at residues 67–88 (LRLSDNWDTLSTILTKLQADFG) and 89–110 (LATQEFWDTLEKETEWLKQIVS). Residues 67 to 264 (LRLSDNWDTL…DQASKQLAAQ (198 aa)) form a 10 X approximate tandem repeats region. One copy of the 3; half-length repeat lies at 111–121 (EDLQDVKHKVQ). 3 repeat units span residues 122–143 (PYLENFQKKVQEEVERYREKVR), 144–165 (PLGIELRDGARQKLQELQEKLT), and 166–187 (PLGEDLRDRTREHVDVLRTQLA). The stretch at 188–207 (PFSEEMRQRLAKRLEELKDS) is one 7; truncated repeat. Residue methionine 193 is modified to Methionine sulfoxide. The stretch at 208 to 229 (ATLADYHAKASEHLKMLGEKAK) is repeat 8. Residues 230-240 (PALEDLRQGLL) form a 9; half-length repeat. The stretch at 241 to 264 (PVLENLKASILSSIDQASKQLAAQ) is repeat 10.

It belongs to the apolipoprotein A1/A4/E family. In terms of assembly, homodimer. Interacts with APOA1BP and CLU. Component of a sperm activating protein complex (SPAP), consisting of APOA1, an immunoglobulin heavy chain, an immunoglobulin light chain and albumin. Interacts with NDRG1. Interacts with SCGB3A2. Interacts with NAXE and YJEFN3. Post-translationally, glycosylated. In terms of processing, palmitoylated. Phosphorylation sites are present in the extracellular medium.

The protein resides in the secreted. Its function is as follows. Participates in the reverse transport of cholesterol from tissues to the liver for excretion by promoting cholesterol efflux from tissues and by acting as a cofactor for the lecithin cholesterol acyltransferase (LCAT). As part of the SPAP complex, activates spermatozoa motility. This Cavia aperea (Brazilian guinea pig) protein is Apolipoprotein A-I (APOA1).